Reading from the N-terminus, the 318-residue chain is Putative 2-hydroxyacid dehydrogenase SSP0606 (318 aa).

Residues 156–157 (EI), 235–237 (ASR), and Asp-261 contribute to the NAD(+) site. Arg-237 is an active-site residue. The active site involves Glu-266. His-284 (proton donor) is an active-site residue. 284–287 (HIGN) lines the NAD(+) pocket.

It belongs to the D-isomer specific 2-hydroxyacid dehydrogenase family.

The chain is Putative 2-hydroxyacid dehydrogenase SSP0606 from Staphylococcus saprophyticus subsp. saprophyticus (strain ATCC 15305 / DSM 20229 / NCIMB 8711 / NCTC 7292 / S-41).